A 448-amino-acid chain; its full sequence is Probable xyloglucan 6-xylosyltransferase 1 (448 aa).

The Cytoplasmic segment spans residues 1-19; the sequence is MWVAERVVGERRMREIQRF. Residues 20 to 42 traverse the membrane as a helical; Signal-anchor for type II membrane protein segment; the sequence is ARNAKLTVVCLLLTVVVLRGTVG. Residues 43–448 are Lumenal-facing; that stretch reads AGKFGTPQQD…AFKAMKTTST (406 aa). Residues 71–113 form a disordered region; the sequence is HHDALSRGGGSSSSSGRAAQRDDEPDPPPRTLRDPPYTLGPKI. Asn-421 carries an N-linked (GlcNAc...) asparagine glycan.

It belongs to the glycosyltransferase 34 family.

The protein resides in the golgi apparatus membrane. The catalysed reaction is Transfers an alpha-D-xylosyl residue from UDP-D-xylose to a glucose residue in xyloglucan, forming an alpha-(1-&gt;6)-D-xylosyl-D-glucose linkage.. Its function is as follows. Probable xyloglucan xylosyltransferase involved in the biosynthesis of xyloglucan in roots. The sequence is that of Probable xyloglucan 6-xylosyltransferase 1 from Oryza sativa subsp. indica (Rice).